Here is a 735-residue protein sequence, read N- to C-terminus: MTSTGKDGGGAQHAQYVGPYRLEKTLGKGQTGLVKLGIHCVTCQKVAIKIVNREKLSESVLMKVEREIAILKLIEHPHVLKLHDVYENKKYLYLVLEHVSGGELFDYLVKKGRLTPKEARKFFRQIISALDFCHSHSICHRDLKPENLLLDERNNIRIADFGMASLQVGDSLLETSCGSPHYACPEVIRGEKYDGRKADVWSCGVILFALLVGALPFDDDNLRQLLEKVKRGVFHMPHFIPPDCQSLLRGMIEVDAARRLTLEHIQKHIWYIGGKNEPEPEQPIPRKVQIRSLPSLEDIDPDVLDSMHSLGCFRDRNKLLQDLLSEEENQEKMIYFLLLDRKERYPSHEDEDLPPRNEIDPPRKRVDSPMLNRHGKRRPERKSMEVLSVTDGGSPVPARRAIEMAQHGQRSRSISGASSGLSTSPLSSPRVTPHPSPRGSPLPTPKGTPVHTPKESPAGTPNPTPPSSPSVGGVPWRTRLNSIKNSFLGSPRFHRRKLQVPTPEEMSNLTPESSPELAKKSWFGNFINLEKEEQIFVVIKDKPLSSIKADIVHAFLSIPSLSHSVISQTSFRAEYKATGGPAVFQKPVKFQVDITYTEGGEAQKENGIYSVTFTLLSGPSRRFKRVVETIQAQLLSTHDQPSAQHLSDTTNCMEVMTGRLSKCGTPLSNFFDVIKQLFSDEKNGQAAQAPSTPAKRSAHGPLGDSAAAGPGGDTEYPMGKDMAKMGPPAARREQP.

One can recognise a Protein kinase domain in the interval 20–271 (YRLEKTLGKG…LEHIQKHIWY (252 aa)). ATP contacts are provided by residues 26-34 (LGKGQTGLV) and K49. D142 (proton acceptor) is an active-site residue. T175 carries the post-translational modification Phosphothreonine; by LKB1. T261 is subject to Phosphothreonine; by PKA. At S295 the chain carries Phosphoserine. The 43-residue stretch at 298–340 (DIDPDVLDSMHSLGCFRDRNKLLQDLLSEEENQEKMIYFLLLD) folds into the UBA domain. Residues 346–367 (PSHEDEDLPPRNEIDPPRKRVD) show a composition bias toward basic and acidic residues. Disordered stretches follow at residues 346-476 (PSHE…GVPW) and 492-516 (RFHR…SSPE). Phosphoserine is present on residues S368, S383, S394, S413, S424, and S428. Residues 411 to 429 (SRSISGASSGLSTSPLSSP) show a composition bias toward low complexity. A compositionally biased stretch (pro residues) spans 432–446 (TPHPSPRGSPLPTPK). The residue at position 456 (S456) is a Phosphoserine. Residues T460, T464, and T510 each carry the phosphothreonine modification. 3 positions are modified to phosphoserine: S513, S514, and S521. The KEN box motif lies at 604–606 (KEN). The segment at 682–735 (KNGQAAQAPSTPAKRSAHGPLGDSAAAGPGGDTEYPMGKDMAKMGPPAARREQP) is disordered.

The protein belongs to the protein kinase superfamily. CAMK Ser/Thr protein kinase family. SNF1 subfamily. Interacts with FZR1, a regulatory subunit of the APC ubiquitin ligase complex. Interacts with COPS5. Interacts with PAK1. Requires Mg(2+) as cofactor. In terms of processing, may be phosphorylated at Thr-261 by PKA. Phosphorylated at Thr-175 by STK11/LKB1 in complex with STE20-related adapter-alpha (STRADA) pseudo kinase and CAB39. Not phosphorylated at Thr-175 by CaMKK2. In contrast, it is phosphorylated and activated by CaMKK1. May be inactivated via dephosphorylation of Thr-175 by PP2C. Post-translationally, polyubiquitinated by the APC complex in conjunction with FZR1, leading to its proteasomal degradation. Targeted for proteasomal degradation by interaction with COPS5. BRSK2 levels change during the cell cycle. BRSK2 levels are low at the G1/S boundary and gradually increase as cells progress into G2 phase. BRSK2 levels decrease rapidly at the end of mitosis. As to expression, detected in pancreas islets and in brain (at protein level). Detected in brain and pancreas.

It localises to the cytoplasm. It is found in the cytoskeleton. The protein localises to the microtubule organizing center. Its subcellular location is the centrosome. The protein resides in the perinuclear region. It localises to the endoplasmic reticulum. It carries out the reaction L-seryl-[protein] + ATP = O-phospho-L-seryl-[protein] + ADP + H(+). The catalysed reaction is L-threonyl-[protein] + ATP = O-phospho-L-threonyl-[protein] + ADP + H(+). The enzyme catalyses L-seryl-[tau protein] + ATP = O-phospho-L-seryl-[tau protein] + ADP + H(+). It catalyses the reaction L-threonyl-[tau protein] + ATP = O-phospho-L-threonyl-[tau protein] + ADP + H(+). Its activity is regulated as follows. Activated by phosphorylation on Thr-175 by STK11/LKB1. Functionally, serine/threonine-protein kinase that plays a key role in polarization of neurons and axonogenesis, cell cycle progress and insulin secretion. Phosphorylates CDK16, CDC25C, MAPT/TAU, PAK1 and WEE1. Following phosphorylation and activation by STK11/LKB1, acts as a key regulator of polarization of cortical neurons, probably by mediating phosphorylation of microtubule-associated proteins such as MAPT/TAU at 'Thr-504' and 'Ser-554'. Also regulates neuron polarization by mediating phosphorylation of WEE1 at 'Ser-642' in post-mitotic neurons, leading to down-regulate WEE1 activity in polarized neurons. Plays a role in the regulation of the mitotic cell cycle progress and the onset of mitosis. Plays a role in the regulation of insulin secretion in response to elevated glucose levels, probably via phosphorylation of CDK16 and PAK1. While BRSK2 phosphorylated at Thr-175 can inhibit insulin secretion, BRSK2 phosphorylated at Thr-261 can promote insulin secretion. Regulates reorganization of the actin cytoskeleton. May play a role in the apoptotic response triggered by endoplasmic reticulum (ER) stress. The sequence is that of Serine/threonine-protein kinase BRSK2 (Brsk2) from Mus musculus (Mouse).